Reading from the N-terminus, the 407-residue chain is Na(+)-translocating NADH-quinone reductase subunit F (407 aa).

Residues 3–23 (IILGVVMFTLIVLALVLVILF) form a helical membrane-spanning segment. One can recognise a 2Fe-2S ferredoxin-type domain in the interval 32–126 (GDITISVNGD…DMDIELPEEI (95 aa)). Residues cysteine 69, cysteine 75, cysteine 78, and cysteine 110 each coordinate [2Fe-2S] cluster. One can recognise an FAD-binding FR-type domain in the interval 129–269 (VKKWECTVIS…SGPFGEFFAK (141 aa)). The catalytic stretch occupies residues 272 to 389 (DAEMVFIGGG…PMMNAAVIGM (118 aa)).

The protein belongs to the NqrF family. In terms of assembly, composed of six subunits; NqrA, NqrB, NqrC, NqrD, NqrE and NqrF. Requires [2Fe-2S] cluster as cofactor. The cofactor is FAD.

Its subcellular location is the cell inner membrane. The catalysed reaction is a ubiquinone + n Na(+)(in) + NADH + H(+) = a ubiquinol + n Na(+)(out) + NAD(+). In terms of biological role, NQR complex catalyzes the reduction of ubiquinone-1 to ubiquinol by two successive reactions, coupled with the transport of Na(+) ions from the cytoplasm to the periplasm. The first step is catalyzed by NqrF, which accepts electrons from NADH and reduces ubiquinone-1 to ubisemiquinone by a one-electron transfer pathway. This chain is Na(+)-translocating NADH-quinone reductase subunit F, found in Vibrio parahaemolyticus serotype O3:K6 (strain RIMD 2210633).